Reading from the N-terminus, the 321-residue chain is Small ribosomal subunit protein mS43 (321 aa).

The transit peptide at 1 to 13 (MLRFTGARAIRKY) directs the protein to the mitochondrion.

This sequence belongs to the mitochondrion-specific ribosomal protein mS43 family. In terms of assembly, component of the mitochondrial small ribosomal subunit (mt-SSU). Mature yeast 74S mitochondrial ribosomes consist of a small (37S) and a large (54S) subunit. The 37S small subunit contains a 15S ribosomal RNA (15S mt-rRNA) and 34 different proteins. The 54S large subunit contains a 21S rRNA (21S mt-rRNA) and 46 different proteins. mS43 forms a heterodimer with mS42, building a large protuberance adjacent to the mRNA channel exit in the mt-SSU body.

It localises to the mitochondrion. Component of the mitochondrial ribosome (mitoribosome), a dedicated translation machinery responsible for the synthesis of mitochondrial genome-encoded proteins, including at least some of the essential transmembrane subunits of the mitochondrial respiratory chain. The mitoribosomes are attached to the mitochondrial inner membrane and translation products are cotranslationally integrated into the membrane. In Saccharomyces cerevisiae (strain ATCC 204508 / S288c) (Baker's yeast), this protein is Small ribosomal subunit protein mS43 (MRP1).